Here is a 211-residue protein sequence, read N- to C-terminus: Shikimate kinase (211 aa).

Low complexity predominate over residues 1 to 13; it reads MNASANLCAASAN. The tract at residues 1–24 is disordered; that stretch reads MNASANLCAASANDPQPGDQEAAH. 50–55 provides a ligand contact to ATP; that stretch reads GAGKTT. Mg(2+) is bound at residue Thr-54. Substrate contacts are provided by Asp-72, Arg-96, and Gly-118. Arg-156 contacts ATP. Arg-175 is a binding site for substrate.

The protein belongs to the shikimate kinase family. As to quaternary structure, monomer. Mg(2+) serves as cofactor.

Its subcellular location is the cytoplasm. The enzyme catalyses shikimate + ATP = 3-phosphoshikimate + ADP + H(+). It participates in metabolic intermediate biosynthesis; chorismate biosynthesis; chorismate from D-erythrose 4-phosphate and phosphoenolpyruvate: step 5/7. Its function is as follows. Catalyzes the specific phosphorylation of the 3-hydroxyl group of shikimic acid using ATP as a cosubstrate. This Bordetella parapertussis (strain 12822 / ATCC BAA-587 / NCTC 13253) protein is Shikimate kinase.